A 398-amino-acid polypeptide reads, in one-letter code: Na(+)/H(+) antiporter NhaA (398 aa).

11 helical membrane-spanning segments follow: residues Ile19–Gly39, Leu64–Leu84, Ile99–Ala119, Gly130–Gly150, Ile159–Phe179, Asn182–Val202, Ile222–Ile242, Ala266–Ile286, Ile299–Val319, Gly337–Phe357, and Leu370–Thr390.

Belongs to the NhaA Na(+)/H(+) (TC 2.A.33) antiporter family.

The protein localises to the cell inner membrane. The enzyme catalyses Na(+)(in) + 2 H(+)(out) = Na(+)(out) + 2 H(+)(in). Na(+)/H(+) antiporter that extrudes sodium in exchange for external protons. In Desulfotalea psychrophila (strain LSv54 / DSM 12343), this protein is Na(+)/H(+) antiporter NhaA.